The primary structure comprises 403 residues: Lipid droplet-regulating VLDL assembly factor AUP1 (403 aa).

Topologically, residues 1-21 (MEQPSVESLLELRRFPRKQLS) are cytoplasmic. An intramembrane segment occupies 22 to 42 (LILLLLYSPLGLCLFLIRLFI). Over 43 to 399 (GAHVFLVSCV…GSVGREEEEK (357 aa)) the chain is Cytoplasmic. Positions 286 to 328 (TQMQMAQHVKEVLPQVPLSAIHRDLGHTGCIDTTITNFLEGRV) constitute a CUE domain.

The protein belongs to the AUP1 family.

It is found in the endoplasmic reticulum membrane. It localises to the lipid droplet. Functionally, plays a role in the translocation of terminally misfolded proteins from the endoplasmic reticulum lumen to the cytoplasm and their degradation by the proteasome. Plays a role in lipid droplet formation. Induces lipid droplet clustering. This Xenopus tropicalis (Western clawed frog) protein is Lipid droplet-regulating VLDL assembly factor AUP1.